The following is a 367-amino-acid chain: Tubulin-like protein CetZ (367 aa).

GTP contacts are provided by residues 11 to 15 (QCGNR), S111, 115 to 117 (GTG), E148, N176, and N194.

This sequence belongs to the CetZ family.

Its subcellular location is the cytoplasm. Functionally, involved in cell shape control. This is Tubulin-like protein CetZ from Methanothrix thermoacetophila (strain DSM 6194 / JCM 14653 / NBRC 101360 / PT) (Methanosaeta thermophila).